We begin with the raw amino-acid sequence, 521 residues long: Insulinoma-associated protein 1 (521 aa).

Residues 1–12 (MPRGFLVKRSKK) are compositionally biased toward basic residues. Residues 1 to 20 (MPRGFLVKRSKKSTPVSYRV) are SNAG domain. Disordered stretches follow at residues 1–59 (MPRG…PPAL), 76–107 (GPPP…PTRP), and 180–230 (AEAA…KPKA). Residues 2–7 (PRGFLV) form a required and sufficient for interaction with KDM1A region. Positions 43 to 56 (PPVPSPGPLPPPPP) are necessary for interaction with CCND1. Composition is skewed to pro residues over residues 43–58 (PPVP…PPPA) and 76–85 (GPPPPPPPGP). Low complexity predominate over residues 209–223 (AAVATEPPAKAAKAP). The segment at 272–292 (FICQLCKEEYADPFALAQHKC) adopts a C2H2-type 1; atypical zinc-finger fold. A C2H2-type 2 zinc finger spans residues 300-322 (YRCPECAKVFSCPANLASHRRWH). A disordered region spans residues 320 to 369 (RWHKPRPVPAAARAPEPEAATRAEAREAAGGGSSDRDTPSPGGVSESGSE). Over residues 334-346 (PEPEAATRAEARE) the composition is skewed to basic and acidic residues. The C2H2-type 3 zinc finger occupies 373–395 (YECHHCAKKFRRQAYLRKHLLAH). The interval 398–419 (ALQAKGAPPPPPPPPPPAEDIL) is disordered. The segment covering 404–415 (APPPPPPPPPPA) has biased composition (pro residues). 2 consecutive C2H2-type zinc fingers follow at residues 452 to 475 (HLCP…RLLH) and 480 to 503 (FPCK…NKCH).

Belongs to the INSM1 family. Interacts (via the N-terminal region) with CCND1 (via cyclin N-terminal domain); the interaction competes with the binding of CCND1 to CDK4 during cell cycle progression and increases its transcriptional repressor activity. Interacts with HDAC3; the interaction increases its transcriptional repressor activity. Interacts (via the SNAG domain) with HDAC1. Interacts (via the SNAG domain) with HDAC2. Interacts (via the SNAG domain) with KDM1A. Interacts (via the SNAG domain) with RCOR1. Interacts with SORBS1. As to expression, expressed in adrenal gland. Expressed in the dentate gyrus of the hippocampus and the wall of the lateral ventricle. Expressed in pancreatic and intestinal endocrine cells.

The protein resides in the nucleus. In terms of biological role, sequence-specific DNA-binding transcriptional regulator that plays a key role in neurogenesis and neuroendocrine cell differentiation during embryonic and/or fetal development. Binds to the consensus sequence 5'-[TG][TC][TC][TT][GA]GGG[CG]A-3' in target promoters. Acts as a transcriptional repressor of NEUROD1 and INS expression via its interaction with cyclin CCND1 in a cell cycle-independent manner. Negatively regulates skeletal muscle-specific gene expression in endocrine cells of the pituitary by inhibiting the Notch signaling pathway. Represses target gene transcription by recruiting chromatin-modifying factors, such as HDAC1, HDAC2, HDAC3, KDM1A and RCOR1 histone deacetylases. Binds to its own promoter, suggesting autoregulation as a self-control feedback mechanism. Competes with histone H3 for the same binding site on the histone demethylase complex formed by KDM1A and RCOR1, and thereby inhibits demethylation of histone H3 at 'Lys-4'. Promotes the generation and expansion of neuronal basal progenitor cells in the developing neocortex. Involved in the differentiation of endocrine cells of the developing anterior pituitary gland, of the pancreas and intestine, and of sympatho-adrenal cells in the peripheral nervous system. Promotes cell cycle signaling arrest and inhibition of cellular proliferation. In Mus musculus (Mouse), this protein is Insulinoma-associated protein 1 (Insm1).